We begin with the raw amino-acid sequence, 618 residues long: DnaJ homolog subfamily C member 2 (618 aa).

A J domain is found at 85 to 158; it reads DHYAVLGLAH…VKRRAFDSVD (74 aa). Disordered stretches follow at residues 281 to 315, 330 to 349, and 419 to 448; these read KEEEKARKESEKKAKVEAKKREQEEKERARQQQEE, QAAQQAKKEKEAQKKAIKKE, and LQKEKDAELQAQQAARGSEHSSAAGGQNNR. Positions 428–448 are enriched in polar residues; it reads QAQQAARGSEHSSAAGGQNNR. SANT domains follow at residues 445–507 and 548–603; these read QNNR…KLDP and SNAA…EMIK.

Component of ribosome-associated complex (RAC).

It localises to the nucleus. Its subcellular location is the cytoplasm. It is found in the cytosol. Its function is as follows. Acts both as a chaperone in the cytosol and as a chromatin regulator in the nucleus. When cytosolic, acts as a molecular chaperone: component of the ribosome-associated complex (RAC), a complex involved in folding or maintaining nascent polypeptides in a folding-competent state. When nuclear, mediates the switching from polycomb-repressed genes to an active state: specifically recruited at histone H2A ubiquitinated at 'Lys-119' (H2AK119ub), and promotes the displacement of the polycomb PRC1 complex from chromatin, thereby facilitating transcription activation. The protein is DnaJ homolog subfamily C member 2 (dnajc2) of Danio rerio (Zebrafish).